The primary structure comprises 366 residues: 4-hydroxy-3-methylbut-2-en-1-yl diphosphate synthase (flavodoxin) (366 aa).

Positions 270, 273, 305, and 312 each coordinate [4Fe-4S] cluster.

Belongs to the IspG family. [4Fe-4S] cluster is required as a cofactor.

The catalysed reaction is (2E)-4-hydroxy-3-methylbut-2-enyl diphosphate + oxidized [flavodoxin] + H2O + 2 H(+) = 2-C-methyl-D-erythritol 2,4-cyclic diphosphate + reduced [flavodoxin]. It participates in isoprenoid biosynthesis; isopentenyl diphosphate biosynthesis via DXP pathway; isopentenyl diphosphate from 1-deoxy-D-xylulose 5-phosphate: step 5/6. Converts 2C-methyl-D-erythritol 2,4-cyclodiphosphate (ME-2,4cPP) into 1-hydroxy-2-methyl-2-(E)-butenyl 4-diphosphate. This is 4-hydroxy-3-methylbut-2-en-1-yl diphosphate synthase (flavodoxin) from Acidithiobacillus ferrooxidans (strain ATCC 53993 / BNL-5-31) (Leptospirillum ferrooxidans (ATCC 53993)).